The chain runs to 443 residues: Mimosinase, chloroplastic (443 aa).

A chloroplast-targeting transit peptide spans 1 to 43 (MALSSTFLNPLVSSVAVNPQPKITSGKGFRVNCLIRTQQTVIK). 6 residues coordinate pyridoxal 5'-phosphate: Tyr105, Arg107, Gly135, Met136, Ser254, and Thr256. At Lys257 the chain carries N6-(pyridoxal phosphate)lysine.

It belongs to the trans-sulfuration enzymes family. In terms of assembly, forms homodimers. May form homotetramers from two homodimers. The cofactor is pyridoxal 5'-phosphate.

The protein localises to the plastid. It is found in the chloroplast. The enzyme catalyses L-mimosine + H2O = 3-hydroxy-4H-pyrid-4-one + pyruvate + NH4(+). Catalyzes the degradation of mimosine, which is a toxic secondary metabolite found in all Leucaena and Mimosa species. The chain is Mimosinase, chloroplastic from Leucaena leucocephala (White popinac).